Reading from the N-terminus, the 224-residue chain is MIGKVAGILDFRGPDHVLIDVRGVGYIVYVSDRTLASMPGLGEGVALYTELVVREDLLQLFGFPTMIEKEWHRLLMTVQGVGAKAGMAILGALGAEGTARAITLGDARSIQAAPGIGPKIAQRVVLELKSKAPALMAMGGGTAALAPSEPPEPEPGTSSGSRRKTRAPEPPRPSHTADALSALANLGYQPTDAAQAVAQAAGESPDADTAALIRAALKLLAPKS.

The segment at 1–64 is domain I; sequence MIGKVAGILD…EDLLQLFGFP (64 aa). Positions 65–143 are domain II; the sequence is TMIEKEWHRL…ALMAMGGGTA (79 aa). A disordered region spans residues 141 to 185; sequence GTAALAPSEPPEPEPGTSSGSRRKTRAPEPPRPSHTADALSALAN. The tract at residues 144 to 170 is flexible linker; it reads ALAPSEPPEPEPGTSSGSRRKTRAPEP. Residues 171 to 224 form a domain III region; the sequence is PRPSHTADALSALANLGYQPTDAAQAVAQAAGESPDADTAALIRAALKLLAPKS.

This sequence belongs to the RuvA family. Homotetramer. Forms an RuvA(8)-RuvB(12)-Holliday junction (HJ) complex. HJ DNA is sandwiched between 2 RuvA tetramers; dsDNA enters through RuvA and exits via RuvB. An RuvB hexamer assembles on each DNA strand where it exits the tetramer. Each RuvB hexamer is contacted by two RuvA subunits (via domain III) on 2 adjacent RuvB subunits; this complex drives branch migration. In the full resolvosome a probable DNA-RuvA(4)-RuvB(12)-RuvC(2) complex forms which resolves the HJ.

It localises to the cytoplasm. In terms of biological role, the RuvA-RuvB-RuvC complex processes Holliday junction (HJ) DNA during genetic recombination and DNA repair, while the RuvA-RuvB complex plays an important role in the rescue of blocked DNA replication forks via replication fork reversal (RFR). RuvA specifically binds to HJ cruciform DNA, conferring on it an open structure. The RuvB hexamer acts as an ATP-dependent pump, pulling dsDNA into and through the RuvAB complex. HJ branch migration allows RuvC to scan DNA until it finds its consensus sequence, where it cleaves and resolves the cruciform DNA. This is Holliday junction branch migration complex subunit RuvA from Cereibacter sphaeroides (strain ATCC 17029 / ATH 2.4.9) (Rhodobacter sphaeroides).